We begin with the raw amino-acid sequence, 355 residues long: UPF0324 membrane protein PA5383 (355 aa).

Transmembrane regions (helical) follow at residues 20–37 (IPGLLLSAALAGVAILLG), 44–66 (HNGISALTLAIVLGILVGNTLYP), 71–93 (GSAAGVGFSKQILLRAGIILYGL), 100–122 (IAGVGLHGVLLDALMLASTFGLA), 137–159 (TLLIGAGSSICGAAAVMATEPVV), 166–188 (VAVAVSTVVVFGTLGIFLYPALF), 233–255 (AVIAKMVRVMMLAPFLILLSAWL), 275–297 (WFAVGFVLVAGLNSLVSLPPALV), 307–324 (LLAMAMAGLGLGTHLSAI), and 331–353 (PLLLAALLFAWLVLGGGFLTRLA).

This sequence belongs to the UPF0324 family.

The protein localises to the cell membrane. The polypeptide is UPF0324 membrane protein PA5383 (Pseudomonas aeruginosa (strain ATCC 15692 / DSM 22644 / CIP 104116 / JCM 14847 / LMG 12228 / 1C / PRS 101 / PAO1)).